A 59-amino-acid chain; its full sequence is MDKKLLEILACPVCKSSLIYKKADQELICKACRLAYPIRDDIPVMLEEQARQFDPEEEI.

Belongs to the UPF0434 family.

This Nitrosococcus oceani (strain ATCC 19707 / BCRC 17464 / JCM 30415 / NCIMB 11848 / C-107) protein is UPF0434 protein Noc_2677.